The following is a 338-amino-acid chain: Tetraacyldisaccharide 4'-kinase (338 aa).

49-56 (TVGGTGKT) contacts ATP.

The protein belongs to the LpxK family.

It catalyses the reaction a lipid A disaccharide + ATP = a lipid IVA + ADP + H(+). It participates in glycolipid biosynthesis; lipid IV(A) biosynthesis; lipid IV(A) from (3R)-3-hydroxytetradecanoyl-[acyl-carrier-protein] and UDP-N-acetyl-alpha-D-glucosamine: step 6/6. Transfers the gamma-phosphate of ATP to the 4'-position of a tetraacyldisaccharide 1-phosphate intermediate (termed DS-1-P) to form tetraacyldisaccharide 1,4'-bis-phosphate (lipid IVA). The protein is Tetraacyldisaccharide 4'-kinase of Geobacter metallireducens (strain ATCC 53774 / DSM 7210 / GS-15).